Here is a 567-residue protein sequence, read N- to C-terminus: Zinc finger protein 512 (567 aa).

Positions 1–34 (MSSRLGAVPATPGPTPFKQQRSTRIVGAKNSRTQ) are disordered. Residues Lys18 and Lys84 each participate in a glycyl lysine isopeptide (Lys-Gly) (interchain with G-Cter in SUMO2) cross-link. Positions 87 to 148 (AASHVEGPGG…QTRRIRKEPP (62 aa)) are disordered. Residues 119–130 (KKHKLYGRKQRP) show a composition bias toward basic residues. The segment at 197-220 (FTCHHCGKQLRSLAGMKYHVMANH) adopts a C2H2-type 1 zinc-finger fold. Lys227 is covalently cross-linked (Glycyl lysine isopeptide (Lys-Gly) (interchain with G-Cter in SUMO2)). The C2H2-type 2 zinc finger occupies 287 to 310 (LKCHHCGKPYRSKAGLAYHLRSEH). Lys333 participates in a covalent cross-link: Glycyl lysine isopeptide (Lys-Gly) (interchain with G-Cter in SUMO2). A C2H2-type 3; atypical zinc finger spans residues 406–430 (IQCPNQGCEAVYSSVSGLKAHLGSC). The segment at 440–463 (YKCLLCQKEFVSESGVKYHINSVH) adopts a C2H2-type 3 zinc-finger fold. Basic and acidic residues predominate over residues 485-494 (KQRQQEEEKR). The segment at 485–567 (KQRQQEEEKR…PKTNHKRGKK (83 aa)) is disordered. Basic residues predominate over residues 495–508 (RQQHRSRRSLRRRQ). The segment covering 523-544 (VGKDQRRNHEELLVATSRKEPE) has biased composition (basic and acidic residues). The segment covering 556–567 (RSPKTNHKRGKK) has biased composition (basic residues).

This sequence belongs to the krueppel C2H2-type zinc-finger protein family.

The protein resides in the nucleus. Functionally, may be involved in transcriptional regulation. The polypeptide is Zinc finger protein 512 (ZNF512) (Bos taurus (Bovine)).